The following is a 364-amino-acid chain: UDP-3-O-acylglucosamine N-acyltransferase (364 aa).

Residue histidine 258 is the Proton acceptor of the active site.

The protein belongs to the transferase hexapeptide repeat family. LpxD subfamily. Homotrimer.

It carries out the reaction a UDP-3-O-[(3R)-3-hydroxyacyl]-alpha-D-glucosamine + a (3R)-hydroxyacyl-[ACP] = a UDP-2-N,3-O-bis[(3R)-3-hydroxyacyl]-alpha-D-glucosamine + holo-[ACP] + H(+). The protein operates within bacterial outer membrane biogenesis; LPS lipid A biosynthesis. Functionally, catalyzes the N-acylation of UDP-3-O-acylglucosamine using 3-hydroxyacyl-ACP as the acyl donor. Is involved in the biosynthesis of lipid A, a phosphorylated glycolipid that anchors the lipopolysaccharide to the outer membrane of the cell. The chain is UDP-3-O-acylglucosamine N-acyltransferase from Burkholderia orbicola (strain MC0-3).